The following is a 323-amino-acid chain: Thiamine-monophosphate kinase (323 aa).

Mg(2+)-binding residues include Asp-30, Ser-45, Thr-46, and Asp-47. His-54 provides a ligand contact to substrate. Residues Asp-75 and Asp-122 each coordinate Mg(2+). Residues 121–122 and Arg-146 each bind ATP; that span reads GD. Asp-212 provides a ligand contact to Mg(2+). Ser-214 serves as a coordination point for ATP. Asp-215 provides a ligand contact to Mg(2+). Positions 263 and 319 each coordinate substrate.

Belongs to the thiamine-monophosphate kinase family.

The catalysed reaction is thiamine phosphate + ATP = thiamine diphosphate + ADP. It participates in cofactor biosynthesis; thiamine diphosphate biosynthesis; thiamine diphosphate from thiamine phosphate: step 1/1. Functionally, catalyzes the ATP-dependent phosphorylation of thiamine-monophosphate (TMP) to form thiamine-pyrophosphate (TPP), the active form of vitamin B1. The polypeptide is Thiamine-monophosphate kinase (Buchnera aphidicola subsp. Acyrthosiphon pisum (strain APS) (Acyrthosiphon pisum symbiotic bacterium)).